The following is a 965-amino-acid chain: Forespore membrane adapter protein MUG56 (965 aa).

A disordered region spans residues 70–175 (SFLMHKSTDE…VQNSNSTSTS (106 aa)). Residues 82-101 (DTPSNLDSPSTQNVGSTNNT) show a composition bias toward polar residues. Low complexity predominate over residues 102-114 (RASQSLLRRSSSF). The span at 124–158 (THASTDNNPFSESSTLQPQTAERTSQQAVRSAITE) shows a compositional bias: polar residues. Low complexity predominate over residues 159-175 (TTNPSVSVQNSNSTSTS). PH domains are found at residues 562–737 (PTPV…EVAS) and 800–961 (VIRM…KEIN).

It belongs to the SPO71 family.

The protein localises to the cytoplasm. It localises to the nucleus. Its subcellular location is the prospore membrane. Its function is as follows. May recruit a lipid transfer protein to the forespore membrane during sporulation, thereby aiding forespore membrane formation. Required for meiosis. The protein is Forespore membrane adapter protein MUG56 of Schizosaccharomyces pombe (strain 972 / ATCC 24843) (Fission yeast).